A 185-amino-acid polypeptide reads, in one-letter code: Ribosome-recycling factor (185 aa).

The protein belongs to the RRF family.

The protein resides in the cytoplasm. In terms of biological role, responsible for the release of ribosomes from messenger RNA at the termination of protein biosynthesis. May increase the efficiency of translation by recycling ribosomes from one round of translation to another. This chain is Ribosome-recycling factor, found in Nocardia farcinica (strain IFM 10152).